The chain runs to 515 residues: 2-isopropylmalate synthase (515 aa).

The Pyruvate carboxyltransferase domain maps to 5 to 267; the sequence is VIIFDTTLRD…HTSLKNDEIH (263 aa). Asp-14, His-202, His-204, and Asn-238 together coordinate Mn(2+). The tract at residues 392–515 is regulatory domain; it reads KLNYLSVQSG…EIKQNKITTV (124 aa).

The protein belongs to the alpha-IPM synthase/homocitrate synthase family. LeuA type 1 subfamily. Homodimer. Mn(2+) serves as cofactor.

The protein resides in the cytoplasm. The enzyme catalyses 3-methyl-2-oxobutanoate + acetyl-CoA + H2O = (2S)-2-isopropylmalate + CoA + H(+). It functions in the pathway amino-acid biosynthesis; L-leucine biosynthesis; L-leucine from 3-methyl-2-oxobutanoate: step 1/4. Functionally, catalyzes the condensation of the acetyl group of acetyl-CoA with 3-methyl-2-oxobutanoate (2-ketoisovalerate) to form 3-carboxy-3-hydroxy-4-methylpentanoate (2-isopropylmalate). The polypeptide is 2-isopropylmalate synthase (Aliivibrio salmonicida (strain LFI1238) (Vibrio salmonicida (strain LFI1238))).